We begin with the raw amino-acid sequence, 150 residues long: D-aminoacyl-tRNA deacylase (150 aa).

The Gly-cisPro motif, important for rejection of L-amino acids motif lies at 133-134; it reads GP.

It belongs to the DTD family. Homodimer.

Its subcellular location is the cytoplasm. It catalyses the reaction glycyl-tRNA(Ala) + H2O = tRNA(Ala) + glycine + H(+). The enzyme catalyses a D-aminoacyl-tRNA + H2O = a tRNA + a D-alpha-amino acid + H(+). In terms of biological role, an aminoacyl-tRNA editing enzyme that deacylates mischarged D-aminoacyl-tRNAs. Also deacylates mischarged glycyl-tRNA(Ala), protecting cells against glycine mischarging by AlaRS. Acts via tRNA-based rather than protein-based catalysis; rejects L-amino acids rather than detecting D-amino acids in the active site. By recycling D-aminoacyl-tRNA to D-amino acids and free tRNA molecules, this enzyme counteracts the toxicity associated with the formation of D-aminoacyl-tRNA entities in vivo and helps enforce protein L-homochirality. The polypeptide is D-aminoacyl-tRNA deacylase (Micrococcus luteus (strain ATCC 4698 / DSM 20030 / JCM 1464 / CCM 169 / CCUG 5858 / IAM 1056 / NBRC 3333 / NCIMB 9278 / NCTC 2665 / VKM Ac-2230) (Micrococcus lysodeikticus)).